Reading from the N-terminus, the 274-residue chain is Putative septum site-determining protein MinD (274 aa).

Position 22–29 (K22–T29) interacts with ATP.

It belongs to the ParA family. MinD subfamily.

It localises to the plastid. Its subcellular location is the chloroplast. In terms of biological role, ATPase required for the correct placement of the division site. The chain is Putative septum site-determining protein MinD (minD-A) from Nephroselmis olivacea (Green alga).